We begin with the raw amino-acid sequence, 142 residues long: Small ribosomal subunit protein uS9 (142 aa).

This sequence belongs to the universal ribosomal protein uS9 family. Component of the small ribosomal subunit (SSU). Mature N.crassa ribosomes consist of a small (40S) and a large (60S) subunit. The 40S small subunit contains 1 molecule of ribosomal RNA (18S rRNA) and at least 32 different proteins. The large 60S subunit contains 3 rRNA molecules (26S, 5.8S and 5S rRNA) and at least 42 different proteins.

It is found in the cytoplasm. Its function is as follows. Component of the ribosome, a large ribonucleoprotein complex responsible for the synthesis of proteins in the cell. The small ribosomal subunit (SSU) binds messenger RNAs (mRNAs) and translates the encoded message by selecting cognate aminoacyl-transfer RNA (tRNA) molecules. The large subunit (LSU) contains the ribosomal catalytic site termed the peptidyl transferase center (PTC), which catalyzes the formation of peptide bonds, thereby polymerizing the amino acids delivered by tRNAs into a polypeptide chain. The nascent polypeptides leave the ribosome through a tunnel in the LSU and interact with protein factors that function in enzymatic processing, targeting, and the membrane insertion of nascent chains at the exit of the ribosomal tunnel. The polypeptide is Small ribosomal subunit protein uS9 (rps-16) (Neurospora crassa (strain ATCC 24698 / 74-OR23-1A / CBS 708.71 / DSM 1257 / FGSC 987)).